The sequence spans 3550 residues: Zinc finger homeobox protein 4 (3550 aa).

Residue M1 is modified to N-acetylmethionine. 3 disordered regions span residues 1-54, 426-479, and 521-614; these read METC…LKTD, HLSS…AYSN, and TSSS…IECP. A compositionally biased stretch (polar residues) spans 9-20; sequence ISRQENGQSTSK. Composition is skewed to basic and acidic residues over residues 39-54 and 433-451; these read EPDR…LKTD and KMSE…KEST. A compositionally biased stretch (acidic residues) spans 467–479; the sequence is EPGDEDEEDAYSN. Composition is skewed to polar residues over residues 542–553 and 566–576; these read GRSNGNVTNSYS and RDGTTAAPSET. 3 C2H2-type zinc fingers span residues 611–634, 642–665, and 697–721; these read IECP…TMMH, LKCP…KEKH, and FRCE…SDKH. Residues 739–763 are disordered; that stretch reads HSAPTPNTSLSGCGTPSPSKPKQKP. Polar residues predominate over residues 742–752; the sequence is PTPNTSLSGCG. C2H2-type zinc fingers lie at residues 765 to 787, 915 to 939, 971 to 993, and 1019 to 1043; these read RRCE…MTSE, YQCK…TDKH, LKCN…TTNH, and YYCA…SVKH. Residues 1100-1142 form a disordered region; that stretch reads KAASEEPSEDAGDPLKPPTVAEDDEKEAHKRDNSEGKISTKDP. Residues 1125-1142 are compositionally biased toward basic and acidic residues; sequence KEAHKRDNSEGKISTKDP. K1165 participates in a covalent cross-link: Glycyl lysine isopeptide (Lys-Gly) (interchain with G-Cter in SUMO2). C2H2-type zinc fingers lie at residues 1188–1211 and 1217–1240; these read YQYP…LSQH and ICCP…THLH. Residues 1271–1339 form a disordered region; that stretch reads APEKSEQDPP…EWNKTSSKDV (69 aa). Over residues 1297 to 1326 the composition is skewed to basic and acidic residues; the sequence is VDDKSMSGLEDSKVGVEIKNEEQKPAKEPV. Residue K1315 forms a Glycyl lysine isopeptide (Lys-Gly) (interchain with G-Cter in SUMO2) linkage. 2 C2H2-type zinc fingers span residues 1368–1390 and 1396–1419; these read YRCN…SQYH and TMCT…EAGH. Residues 1467–1492 form a disordered region; the sequence is EGKASPVESDGSSIPDDLGLEPKRTL. The C2H2-type 12 zinc-finger motif lies at 1512 to 1538; it reads YKCTVCKESFTQKNILLVHYNSVSHLH. K1562 participates in a covalent cross-link: Glycyl lysine isopeptide (Lys-Gly) (interchain with G-Cter in SUMO2). A C2H2-type 13 zinc finger spans residues 1564–1588; that stretch reads YKCSTCSVAYSQSSTLEIHMRSVLH. The disordered stretch occupies residues 1779 to 1873; that stretch reads PQLQPQNQQP…CIPPPRIASG (95 aa). The segment covering 1792–1808 has biased composition (low complexity); the sequence is QQQQPQQQPSKLLKQEQ. K1805 participates in a covalent cross-link: Glycyl lysine isopeptide (Lys-Gly) (interchain with G-Cter in SUMO2). Over residues 1823-1860 the composition is skewed to basic and acidic residues; sequence PSYKEAEEVTEKQEKPKQEFINDTEGLKDSKDIKKQKS. A C2H2-type 14 zinc finger spans residues 1916-1939; it reads LECGICGKLFSNVLILKSHQEHVH. The segment at 1984–2006 is disordered; sequence KIPNTVSAPLQAPPPTPPSAPQQ. A compositionally biased stretch (pro residues) spans 1994 to 2003; that stretch reads QAPPPTPPSA. DNA-binding regions (homeobox) lie at residues 2069–2128 and 2166–2225; these read FKRP…RQRN and KRSS…RKSY. A C2H2-type 15; degenerate zinc finger spans residues 2252 to 2276; it reads YQCKKCNVVFPRIFDLITHQKKQCY. A compositionally biased stretch (polar residues) spans 2318–2331; the sequence is TLVASSGSGTSTPL. The interval 2318–2412 is disordered; the sequence is TLVASSGSGT…SQTPIPSSPL (95 aa). The span at 2337–2355 shows a compositional bias: basic and acidic residues; sequence PEPEKNSPKTEYPGEKTKQ. Over residues 2356-2376 the composition is skewed to polar residues; sequence SDPSLPQGTKSAPSSVLTSSE. The span at 2383–2392 shows a compositional bias: pro residues; sequence PQPPTQPPKQ. Residues 2401–2412 show a composition bias toward polar residues; it reads SASQTPIPSSPL. The segment at 2430 to 2452 adopts a C2H2-type 16 zinc-finger fold; sequence YPCDQCTLAFPTLELWKEHQHMH. Positions 2490-2508 are enriched in polar residues; sequence GSSLTQMPPQTSTAHTTAP. The disordered stretch occupies residues 2490–2545; sequence GSSLTQMPPQTSTAHTTAPASVAASLKRKLEDKEDNNCSEKEGGNSGEDQHRDKRL. Positions 2517–2541 are enriched in basic and acidic residues; sequence RKLEDKEDNNCSEKEGGNSGEDQHR. A DNA-binding region (homeobox 3) is located at residues 2542-2601; the sequence is DKRLRTTITPEQLEILYEKYLLDSNPTRKMLDHIAREVGLKKRVVQVWFQNTRARERKGQ. The segment at 2612–2635 adopts a C2H2-type 17 zinc-finger fold; that stretch reads KRCPFCRALFKAKSALESHIRSRH. The residue at position 2645 (S2645) is a Phosphoserine. 2 disordered regions span residues 2746–2791 and 2810–2866; these read AISD…ATTP and HFND…PGHK. The span at 2781–2791 shows a compositional bias: polar residues; the sequence is LDSLQKPATTP. Positions 2811–2820 are enriched in basic and acidic residues; the sequence is FNDKDGDHDQ. The segment covering 2843–2855 has biased composition (low complexity); it reads PSSPNPFGSSNPF. Residues 2865 to 2924 constitute a DNA-binding region (homeobox 4); that stretch reads HKRFRTQMSNLQLKVLKACFSDYRTPTMQECEMLGNEIGLPKRVVQVWFQNARAKERKFK. The segment at 2943–2967 adopts a C2H2-type 18 zinc-finger fold; that stretch reads PECTLCGVKYSARLSIRDHIFSKQH. 2 disordered regions span residues 3051-3156 and 3261-3318; these read PSSL…EEKI and QDSL…VQLD. The segment covering 3058–3068 has biased composition (polar residues); it reads PQNSNTLTSPG. The segment covering 3075-3088 has biased composition (low complexity); sequence PSSATSSPALSLSS. Positions 3097–3109 are enriched in pro residues; sequence TPPPPPPPPPPPS. The span at 3136–3156 shows a compositional bias: basic and acidic residues; sequence IKEEESEAIKPEKHPKKEEKI. K3137 is covalently cross-linked (Glycyl lysine isopeptide (Lys-Gly) (interchain with G-Cter in SUMO2)). The stretch at 3248-3277 forms a coiled coil; it reads ALLQQYQQYQQSLQDSLQKQQKQQQEQQQK. Residues 3261 to 3276 show a composition bias toward low complexity; sequence QDSLQKQQKQQQEQQQ. Residues 3298–3318 show a composition bias toward basic and acidic residues; that stretch reads SETKEEKSTAPESTKEEVQLD. A C2H2-type 19; degenerate zinc finger spans residues 3337 to 3361; that stretch reads FVCRKCQMMFTDEDATVNHQKSFCY. The segment at 3381-3405 adopts a C2H2-type 20 zinc-finger fold; the sequence is YQCLACDLALSGNEALSQHLQSSLH. Residues 3424–3445 form a disordered region; sequence LPHSVCSPPPNTSSTSPSAASS. Over residues 3435-3445 the composition is skewed to low complexity; sequence TSSTSPSAASS.

This sequence belongs to the krueppel C2H2-type zinc-finger protein family. As to expression, expressed in brain, heart, lung, muscle and small intestine. No expression detected in undifferentiated P19 cells, however, expression was seen following retinoic acid treatment to induce neuronal differentiation. Expressed in undifferentiated C2C12 cells, following induction of muscle differentiation in a low-serum medium, expression levels were decreased.

It localises to the nucleus. In terms of biological role, may play a role in neural and muscle differentiation. May be involved in transcriptional regulation. The chain is Zinc finger homeobox protein 4 (Zfhx4) from Mus musculus (Mouse).